The following is a 191-amino-acid chain: Protein Ves (191 aa).

Belongs to the Ves family.

The chain is Protein Ves from Shigella flexneri serotype 5b (strain 8401).